The following is a 303-amino-acid chain: GILPECKLVPEEISFVLSTRENRDGVYLTLQKLKNGKMFKNSDLSSKKVPFLIHGFISSATNKNYADMTRALLDKDDIMVISIDWRDGACSNEFALLKFIGYPKAVENTRAVGKYIADFSKILIQKYKVLLENIRLIGHSLGAQIAGFAGKEFQRFKLGKYPEIIGLDPAGPSFKKKDCPERICETDAHYVQILHTSSNLGTERTLGTVDFYINDGSNQPGCTYIIGETCSHTRAVKYLTECIRRECCLIGVPQSKNPQPVSKCTRNECVCVGLNAKEYPKKGSFYVPVEAKAPFCNNNGKII.

Cys-6 and Cys-90 form a disulfide bridge. Ser-140 functions as the Nucleophile in the catalytic mechanism. The Charge relay system role is filled by Asp-168. Cys-179 and Cys-184 are oxidised to a cystine. Residue His-232 is the Charge relay system of the active site. 3 disulfides stabilise this stretch: Cys-247–Cys-271, Cys-248–Cys-296, and Cys-264–Cys-269.

It belongs to the AB hydrolase superfamily. Lipase family. Expressed by the venom gland.

Its subcellular location is the secreted. It carries out the reaction a 1,2-diacyl-sn-glycero-3-phosphocholine + H2O = a 2-acyl-sn-glycero-3-phosphocholine + a fatty acid + H(+). Its function is as follows. Catalyzes the hydrolysis of phosphatidylcholine with phospholipase A1 activity. May act as an allergen and induce hemolytic activity. This Dolichovespula maculata (Bald-faced hornet) protein is Phospholipase A1 2.